Consider the following 176-residue polypeptide: Zinc finger A20 and AN1 domain-containing stress-associated protein 9 (176 aa).

The A20-type zinc-finger motif lies at 16–50; sequence ASEPKLCVKGCGFFGSPSNMDLCSKCYRGICAEEA. Zn(2+) contacts are provided by C22, C26, C38, C41, C117, C120, C131, C133, C138, H141, H147, and C149. The segment at 111–157 adopts an AN1-type zinc-finger fold; sequence PARTNRCLCCNKKVGIMGFKCKCGSTFCGEHRYPETHDCSFDFKEVG.

In terms of biological role, may be involved in environmental stress response. This Arabidopsis thaliana (Mouse-ear cress) protein is Zinc finger A20 and AN1 domain-containing stress-associated protein 9 (SAP9).